We begin with the raw amino-acid sequence, 210 residues long: Probable glutathione peroxidase 8 (210 aa).

Residues 21–40 (VLLSMTVGVGCLLLLQTQLL) form a helical membrane-spanning segment.

It belongs to the glutathione peroxidase family.

The protein localises to the membrane. The enzyme catalyses 2 glutathione + H2O2 = glutathione disulfide + 2 H2O. In Tetraodon nigroviridis (Spotted green pufferfish), this protein is Probable glutathione peroxidase 8 (gpx8).